Consider the following 511-residue polypeptide: Cytochrome P450 89A9 (511 aa).

Residues 6–26 traverse the membrane as a helical; Signal-anchor for type II membrane protein segment; the sequence is IIFLIISSLTFSIFLKLIFFF. Cys-454 provides a ligand contact to heme.

The protein belongs to the cytochrome P450 family. Heme serves as cofactor.

It localises to the endoplasmic reticulum membrane. It carries out the reaction primary fluorescent chlorophyll catabolite + reduced [NADPH--hemoprotein reductase] + O2 = primary fluorescent dioxobilin-type chlorophyll catabolite + formate + oxidized [NADPH--hemoprotein reductase] + 2 H(+). It participates in porphyrin-containing compound metabolism; chlorophyll degradation. Its function is as follows. Involved in the chlorophyll breakdown by its action in nonpolar primary fluorescent chlorophyll catabolite (pFCC) decarbonylation. Involved in the formation of major chlorophyll breakdown products, including non-fluorescent dioxobilin-type chlorophyll catabolites (NDCCs), during leaf senescence. The protein is Cytochrome P450 89A9 of Arabidopsis thaliana (Mouse-ear cress).